A 211-amino-acid polypeptide reads, in one-letter code: Cytochrome c biogenesis ATP-binding export protein CcmA (211 aa).

Positions 1–211 (MAIHNLACVR…RMAEATSCFG (211 aa)) constitute an ABC transporter domain. 33 to 40 (GSNGAGKT) contributes to the ATP binding site.

The protein belongs to the ABC transporter superfamily. CcmA exporter (TC 3.A.1.107) family. As to quaternary structure, the complex is composed of two ATP-binding proteins (CcmA) and two transmembrane proteins (CcmB).

The protein resides in the cell inner membrane. The enzyme catalyses heme b(in) + ATP + H2O = heme b(out) + ADP + phosphate + H(+). Part of the ABC transporter complex CcmAB involved in the biogenesis of c-type cytochromes; once thought to export heme, this seems not to be the case, but its exact role is uncertain. Responsible for energy coupling to the transport system. The sequence is that of Cytochrome c biogenesis ATP-binding export protein CcmA from Sodalis glossinidius (strain morsitans).